We begin with the raw amino-acid sequence, 255 residues long: tRNA pseudouridine synthase A (255 aa).

Residue Asp60 is the Nucleophile of the active site. Position 118 (Tyr118) interacts with substrate.

The protein belongs to the tRNA pseudouridine synthase TruA family. Homodimer.

It catalyses the reaction uridine(38/39/40) in tRNA = pseudouridine(38/39/40) in tRNA. Formation of pseudouridine at positions 38, 39 and 40 in the anticodon stem and loop of transfer RNAs. This is tRNA pseudouridine synthase A from Leuconostoc mesenteroides subsp. mesenteroides (strain ATCC 8293 / DSM 20343 / BCRC 11652 / CCM 1803 / JCM 6124 / NCDO 523 / NBRC 100496 / NCIMB 8023 / NCTC 12954 / NRRL B-1118 / 37Y).